A 77-amino-acid polypeptide reads, in one-letter code: Distinctin-like peptide (77 aa).

Residues 1–19 (LKKSLFLVTFLALVPLFLC) form the signal peptide. Positions 20-39 (EEEKREEENEERQDDDQSEE) are excised as a propeptide.

The protein belongs to the frog skin active peptide (FSAP) family. Expressed by the skin glands.

The protein resides in the secreted. Has antimicrobial activity. This is Distinctin-like peptide from Pithecopus azureus (Orange-legged monkey tree frog).